The primary structure comprises 60 residues: Temporin-CG1 (60 aa).

The first 22 residues, 1-22 (MFTLKKSLLLLFFLATINLSLC), serve as a signal peptide directing secretion. Residues 23-43 (EQERNAEEERRDDDERNAEVE) constitute a propeptide, removed in mature form.

In terms of tissue distribution, expressed by the skin glands.

The protein localises to the secreted. In terms of biological role, antimicrobial peptide active against a variety of Gram-positive and some Gram-negative bacterial strains. Has antifungal activity against a slime mold isolate. Has weak hemolytic activity against human erythrocytes. This is Temporin-CG1 from Amolops chunganensis (Chungan torrent frog).